A 1376-amino-acid chain; its full sequence is Mediator of RNA polymerase II transcription subunit 23 (1376 aa).

The segment covering 1346–1369 (SNSSSVQQTSSASSPTAQSTAGAA) has biased composition (low complexity). Positions 1346-1376 (SNSSSVQQTSSASSPTAQSTAGAAIPLSVTQ) are disordered.

Belongs to the Mediator complex subunit 23 family. Component of the Mediator complex.

It localises to the nucleus. Its function is as follows. Component of the Mediator complex, a coactivator involved in the regulated transcription of nearly all RNA polymerase II-dependent genes. Mediator functions as a bridge to convey information from gene-specific regulatory proteins to the basal RNA polymerase II transcription machinery. Mediator is recruited to promoters by direct interactions with regulatory proteins and serves as a scaffold for the assembly of a functional preinitiation complex with RNA polymerase II and the general transcription factors. The chain is Mediator of RNA polymerase II transcription subunit 23 (med23) from Danio rerio (Zebrafish).